The following is a 691-amino-acid chain: Elongation factor G (691 aa).

A tr-type G domain is found at 8–282 (HMVRNIGIAA…AVVDYLPAPD (275 aa)). GTP is bound by residues 17-24 (AHIDAGKT), 81-85 (DTPGH), and 135-138 (NKMD).

It belongs to the TRAFAC class translation factor GTPase superfamily. Classic translation factor GTPase family. EF-G/EF-2 subfamily.

The protein resides in the cytoplasm. Catalyzes the GTP-dependent ribosomal translocation step during translation elongation. During this step, the ribosome changes from the pre-translocational (PRE) to the post-translocational (POST) state as the newly formed A-site-bound peptidyl-tRNA and P-site-bound deacylated tRNA move to the P and E sites, respectively. Catalyzes the coordinated movement of the two tRNA molecules, the mRNA and conformational changes in the ribosome. The protein is Elongation factor G of Campylobacter hominis (strain ATCC BAA-381 / DSM 21671 / CCUG 45161 / LMG 19568 / NCTC 13146 / CH001A).